The following is a 327-amino-acid chain: Zinc transport protein ZntB (327 aa).

Topologically, residues 1–273 (MEAIKGADVN…ARRTYTMSLM (273 aa)) are cytoplasmic. Residues 274–294 (AMVFLPSTFLTGLFGVNLGGI) form a helical membrane-spanning segment. The Periplasmic portion of the chain corresponds to 295–300 (PGGGWR). A helical transmembrane segment spans residues 301 to 321 (FGFSLFCILLVVLIGGVALWL). Over 322–327 (HRSKWL) the chain is Cytoplasmic.

This sequence belongs to the CorA metal ion transporter (MIT) (TC 1.A.35) family.

Its subcellular location is the cell inner membrane. The enzyme catalyses Zn(2+)(out) + H(+)(out) = Zn(2+)(in) + H(+)(in). Zinc transporter. Acts as a Zn(2+):proton symporter, which likely mediates zinc ion uptake. This Escherichia fergusonii (strain ATCC 35469 / DSM 13698 / CCUG 18766 / IAM 14443 / JCM 21226 / LMG 7866 / NBRC 102419 / NCTC 12128 / CDC 0568-73) protein is Zinc transport protein ZntB.